The sequence spans 482 residues: G patch domain-containing protein 2-like (482 aa).

A phosphoserine mark is found at S31, S86, and S88. At T91 the chain carries Phosphothreonine. Disordered regions lie at residues 195 to 222 and 408 to 482; these read SQPGRKERMECEAEEQKHGSDENMSECD and KRKR…TNGC. The segment covering 198–215 has biased composition (basic and acidic residues); it reads GRKERMECEAEEQKHGSD. Positions 414-427 are enriched in low complexity; the sequence is VASASFSSPSPVHP. Over residues 468-482 the composition is skewed to polar residues; sequence EKNSGCSSSPGTNGC.

This Mus musculus (Mouse) protein is G patch domain-containing protein 2-like (Gpatch2l).